A 211-amino-acid polypeptide reads, in one-letter code: Protein-methionine-sulfoxide reductase heme-binding subunit MsrQ (211 aa).

Transmembrane regions (helical) follow at residues 17-37, 82-102, 116-136, and 153-173; these read LAGLLPFLWLVWAINHGGLGA, LWCFAWATLHLTSYALLELGV, PYLTLGIISWVILLALAFTST, and FVYLVAILAPIHYLWSVKIIS.

The protein belongs to the MsrQ family. In terms of assembly, heterodimer of a catalytic subunit (MsrP) and a heme-binding subunit (MsrQ). It depends on FMN as a cofactor. Heme b serves as cofactor.

The protein localises to the cell inner membrane. Functionally, part of the MsrPQ system that repairs oxidized periplasmic proteins containing methionine sulfoxide residues (Met-O), using respiratory chain electrons. Thus protects these proteins from oxidative-stress damage caused by reactive species of oxygen and chlorine generated by the host defense mechanisms. MsrPQ is essential for the maintenance of envelope integrity under bleach stress, rescuing a wide series of structurally unrelated periplasmic proteins from methionine oxidation, including the primary periplasmic chaperone SurA and the lipoprotein Pal. MsrQ provides electrons for reduction to the reductase catalytic subunit MsrP, using the quinone pool of the respiratory chain. The protein is Protein-methionine-sulfoxide reductase heme-binding subunit MsrQ of Shigella boydii serotype 18 (strain CDC 3083-94 / BS512).